The chain runs to 318 residues: NADH-ubiquinone oxidoreductase chain 1 (318 aa).

8 consecutive transmembrane segments (helical) span residues F2–L22, M70–P90, L100–G120, I140–F160, L172–E192, G217–I237, E253–I273, and L294–I314.

It belongs to the complex I subunit 1 family. Core subunit of respiratory chain NADH dehydrogenase (Complex I) which is composed of 45 different subunits.

The protein resides in the mitochondrion inner membrane. It carries out the reaction a ubiquinone + NADH + 5 H(+)(in) = a ubiquinol + NAD(+) + 4 H(+)(out). Its function is as follows. Core subunit of the mitochondrial membrane respiratory chain NADH dehydrogenase (Complex I) which catalyzes electron transfer from NADH through the respiratory chain, using ubiquinone as an electron acceptor. Essential for the catalytic activity and assembly of complex I. This is NADH-ubiquinone oxidoreductase chain 1 (MT-ND1) from Emballonura alecto (Philippine sheath-tailed bat).